The following is a 497-amino-acid chain: MATQFDENTVITIFGASGDLSKKKTFPALFGLYREGYLNPTTKIIGYARSKLSNEDLREKVKPFLKKPNGAKDDAKVNEFLSMVSYHAGPYDSDEGYLELKKIIEEFEAEKKVDEPHRLFYLALPPSIFIDVCSKLKENLYTESGIQRVIVEKPFGHDLQSATELQEKLAPLFSEDELFRIDHYLGKEMVKNLLLMRFGNTFLNAAWNKENIQSVQVVFKEPFGTEGRGGYFDSIGIIRDVMQNHLLQVLTLLTMERPVSFDPESVRDEKVKVLKAFSPIDHDDILIGQYGRSVDGSKPSYLDDETVKEDSKCVTFAAIGFKIANERWDGVPIVMRAGKALNEGKVEIRIQFRRVASGMFTDIPNNELVIRIQPNEAIYLKCNAKTPGLANENQTTELDLTYSERYKNYWIPEAYESLIRDALLGDHSNFVRDDELDVSWKLFTPLLNYLEGPDGPQPKIYPYGCRSPDGLVEFLADHGYTFSKPGSYQWPVTTPKM.

Residues 15–22, arginine 49, and lysine 153 each bind NADP(+); that span reads GASGDLSK. D-glucose 6-phosphate is bound by residues lysine 153, 183 to 187, glutamate 221, and aspartate 240; that span reads HYLGK. The active-site Proton acceptor is the histidine 245. Arginine 336 contributes to the NADP(+) binding site. Residue lysine 339 participates in D-glucose 6-phosphate binding. NADP(+)-binding residues include lysine 345, arginine 349, and arginine 371. D-glucose 6-phosphate is bound at residue glutamine 373. NADP(+) is bound by residues 379 to 381, 399 to 401, and arginine 466; these read YLK and DLT.

The protein belongs to the glucose-6-phosphate dehydrogenase family.

It catalyses the reaction D-glucose 6-phosphate + NADP(+) = 6-phospho-D-glucono-1,5-lactone + NADPH + H(+). The protein operates within carbohydrate degradation; pentose phosphate pathway; D-ribulose 5-phosphate from D-glucose 6-phosphate (oxidative stage): step 1/3. Catalyzes the rate-limiting step of the oxidative pentose-phosphate pathway, which represents a route for the dissimilation of carbohydrates besides glycolysis. The main function of this enzyme is to provide reducing power (NADPH) and pentose phosphates for fatty acid and nucleic acid synthesis. The polypeptide is Glucose-6-phosphate 1-dehydrogenase (ZWF) (Kluyveromyces lactis (strain ATCC 8585 / CBS 2359 / DSM 70799 / NBRC 1267 / NRRL Y-1140 / WM37) (Yeast)).